We begin with the raw amino-acid sequence, 160 residues long: uncharacterized protein (160 aa).

A Cupin type-2 domain is found at 37–110 (LMSLKPKEDI…TDYLKLYTIY (74 aa)).

It localises to the virion. This is an uncharacterized protein from Acanthamoeba polyphaga mimivirus (APMV).